We begin with the raw amino-acid sequence, 141 residues long: Hemoglobin subunit alpha-A (141 aa).

Residues 1–141 form the Globin domain; sequence VLSSGDKANV…VSTVLTSKYR (141 aa). His-58 is an O2 binding site. Residue His-87 participates in heme b binding.

This sequence belongs to the globin family. Heterotetramer of two alpha chains and two beta chains. In terms of tissue distribution, red blood cells.

Its function is as follows. Involved in oxygen transport from the lung to the various peripheral tissues. In Caretta caretta (Loggerhead sea turtle), this protein is Hemoglobin subunit alpha-A (HBAA).